Here is a 327-residue protein sequence, read N- to C-terminus: GMP reductase (327 aa).

The active-site Thioimidate intermediate is the C176. Residue 205–228 participates in NADP(+) binding; it reads IIADGGIRTHGDIAKSIRFGASMV.

The protein belongs to the IMPDH/GMPR family. GuaC type 2 subfamily.

It carries out the reaction IMP + NH4(+) + NADP(+) = GMP + NADPH + 2 H(+). Its function is as follows. Catalyzes the irreversible NADPH-dependent deamination of GMP to IMP. It functions in the conversion of nucleobase, nucleoside and nucleotide derivatives of G to A nucleotides, and in maintaining the intracellular balance of A and G nucleotides. This chain is GMP reductase, found in Streptococcus gordonii (strain Challis / ATCC 35105 / BCRC 15272 / CH1 / DL1 / V288).